A 513-amino-acid polypeptide reads, in one-letter code: 2-isopropylmalate synthase (513 aa).

Residues 5 to 268 (LIIFDTTLRD…DIGVDTTQIV (264 aa)) enclose the Pyruvate carboxyltransferase domain. Residues Asp14, His202, His204, and Asn239 each coordinate Mn(2+). Positions 394–513 (RFISLSQRSE…KAVQKINPQI (120 aa)) are regulatory domain.

It belongs to the alpha-IPM synthase/homocitrate synthase family. LeuA type 1 subfamily. As to quaternary structure, homodimer. Requires Mn(2+) as cofactor.

It is found in the cytoplasm. It catalyses the reaction 3-methyl-2-oxobutanoate + acetyl-CoA + H2O = (2S)-2-isopropylmalate + CoA + H(+). The protein operates within amino-acid biosynthesis; L-leucine biosynthesis; L-leucine from 3-methyl-2-oxobutanoate: step 1/4. In terms of biological role, catalyzes the condensation of the acetyl group of acetyl-CoA with 3-methyl-2-oxobutanoate (2-ketoisovalerate) to form 3-carboxy-3-hydroxy-4-methylpentanoate (2-isopropylmalate). This chain is 2-isopropylmalate synthase, found in Cupriavidus necator (strain ATCC 17699 / DSM 428 / KCTC 22496 / NCIMB 10442 / H16 / Stanier 337) (Ralstonia eutropha).